We begin with the raw amino-acid sequence, 232 residues long: 2,3,4,5-tetrahydropyridine-2,6-dicarboxylate N-acetyltransferase (232 aa).

The protein belongs to the transferase hexapeptide repeat family. DapH subfamily.

It carries out the reaction (S)-2,3,4,5-tetrahydrodipicolinate + acetyl-CoA + H2O = L-2-acetamido-6-oxoheptanedioate + CoA. Its pathway is amino-acid biosynthesis; L-lysine biosynthesis via DAP pathway; LL-2,6-diaminopimelate from (S)-tetrahydrodipicolinate (acetylase route): step 1/3. In terms of biological role, catalyzes the transfer of an acetyl group from acetyl-CoA to tetrahydrodipicolinate. This is 2,3,4,5-tetrahydropyridine-2,6-dicarboxylate N-acetyltransferase from Streptococcus pneumoniae (strain Taiwan19F-14).